The following is a 291-amino-acid chain: Protease HtpX (291 aa).

The next 2 membrane-spanning stretches (helical) occupy residues 4–24 (ILLFLATNLAVLVIASITLKL) and 36–56 (GSLLVFCAVFGFAGSLVSLFI). A Zn(2+)-binding site is contributed by His142. The active site involves Glu143. His146 contributes to the Zn(2+) binding site. Helical transmembrane passes span 150–170 (GDMVTLALIQGVVNTFVMFFA) and 193–213 (FVATIFAELVLGILASIIVMW). Glu219 contacts Zn(2+).

This sequence belongs to the peptidase M48B family. The cofactor is Zn(2+).

The protein resides in the cell inner membrane. The polypeptide is Protease HtpX (Pseudomonas aeruginosa (strain LESB58)).